A 79-amino-acid chain; its full sequence is Neurotoxin 3FTx-LI (79 aa).

The first 21 residues, 1–21, serve as a signal peptide directing secretion; it reads MKTLLLTLVVVTIVCLDLGYT. 4 cysteine pairs are disulfide-bonded: cysteine 24–cysteine 43, cysteine 36–cysteine 61, cysteine 65–cysteine 71, and cysteine 72–cysteine 77.

In terms of tissue distribution, expressed by the venom gland.

Its subcellular location is the secreted. In terms of biological role, blocks both the muscle-twitch response to nerve stimulation and the response to exogenous acetylcholine. The polypeptide is Neurotoxin 3FTx-LI (Bungarus fasciatus (Banded krait)).